The sequence spans 251 residues: MSAISSLVLIGWAMCLENSYKYYDPVLQPTNFYKPSTAAFLESRPLMFAPEQLSRNAILHNPVAFGEGNFYKLLYPSMTRLTSYLNDHSPLFGDWYRSPSLIMSKSDKEEVISGLYKAQPKGDKDLKEFWGFIMGELLIRDLPELKKSLGELKGIQNEERKKKSVAEFKDIADQKDNDENSFFGTAWFILDCLSLGVSNRNAEIYGDVIGPFVDAAIAFKSLEHNFSNIIGSSRSMSSYRTNSTEQIGSKK.

An N-terminal signal peptide occupies residues 1-15; that stretch reads MSAISSLVLIGWAMC. Residues N225 and N242 are each glycosylated (N-linked (GlcNAc...) asparagine).

This is an uncharacterized protein from Encephalitozoon cuniculi (strain GB-M1) (Microsporidian parasite).